Consider the following 103-residue polypeptide: Signal recognition particle 19 kDa protein (103 aa).

Belongs to the SRP19 family. Part of the signal recognition particle protein translocation system, which is composed of SRP and FtsY. Archaeal SRP consists of a 7S RNA molecule of 300 nucleotides and two protein subunits: SRP54 and SRP19.

It localises to the cytoplasm. Involved in targeting and insertion of nascent membrane proteins into the cytoplasmic membrane. Binds directly to 7S RNA and mediates binding of the 54 kDa subunit of the SRP. The protein is Signal recognition particle 19 kDa protein of Hyperthermus butylicus (strain DSM 5456 / JCM 9403 / PLM1-5).